The chain runs to 74 residues: DNA-directed RNA polymerase subunit omega (74 aa).

This sequence belongs to the RNA polymerase subunit omega family. In terms of assembly, the RNAP catalytic core consists of 2 alpha, 1 beta, 1 beta' and 1 omega subunit. When a sigma factor is associated with the core the holoenzyme is formed, which can initiate transcription.

It carries out the reaction RNA(n) + a ribonucleoside 5'-triphosphate = RNA(n+1) + diphosphate. Its function is as follows. Promotes RNA polymerase assembly. Latches the N- and C-terminal regions of the beta' subunit thereby facilitating its interaction with the beta and alpha subunits. The chain is DNA-directed RNA polymerase subunit omega from Marinomonas sp. (strain MWYL1).